We begin with the raw amino-acid sequence, 770 residues long: Signal transducer and activator of transcription 3 (770 aa).

Alanine 2 is modified (N-acetylalanine). An N6-acetyllysine mark is found at lysine 49 and lysine 87. An Essential for nuclear import motif is present at residues aspartate 150–methionine 162. The region spanning tryptophan 580–leucine 670 is the SH2 domain. An allysine; alternate mark is found at lysine 601, lysine 615, and lysine 631. Residues lysine 601, lysine 615, and lysine 631 each carry the N6-acetyllysine; alternate modification. Tyrosine 640 bears the Phosphotyrosine; by TYK2 mark. Lysine 685 bears the Allysine; alternate mark. At lysine 685 the chain carries N6-acetyllysine; alternate. The residue at position 705 (tyrosine 705) is a Phosphotyrosine; by FER and PTK6. At lysine 707 the chain carries N6-acetyllysine. Threonine 714 carries the post-translational modification Phosphothreonine. A Phosphoserine; by DYRK2, NLK, NEK6, IRAK1, RPS6KA5, ZIPK/DAPK3 and PKC/PRKCE modification is found at serine 727.

Belongs to the transcription factor STAT family. In terms of assembly, forms a homodimer or a heterodimer with a related family member (at least STAT1). Component of a promoter-binding complex composed of STAT3, NFATC3 and NFATC4; complex formation is enhanced by calcineurin. Interacts with IL31RA, NCOA1, PELP1, SIPAR, SOCS7, STATIP1 and TMF1. Interacts with IL23R in presence of IL23. Interacts (via SH2 domain) with NLK. Interacts with ARL2BP; the interaction is enhanced by LIF and JAK1 expression. Interacts with KPNA4 and KPNA5; KPNA4 may be the primary mediator of nuclear import. Interacts with CAV2; the interaction is increased on insulin-induced tyrosine phosphorylation of CAV2 and leads to STAT3 activation. Interacts with ARL2BP; interaction is enhanced with ARL2. Interacts with NEK6. Binds to CDK9 when activated and nuclear. Interacts with BMX. Interacts with ZIPK/DAPK3. Interacts with PIAS3; the interaction occurs on stimulation by IL6, CNTF or OSM and inhibits the DNA binding activity of STAT3. In prostate cancer cells, interacts with PRKCE and promotes DNA binding activity of STAT3. Interacts with STMN3, antagonizing its microtubule-destabilizing activity. Interacts with the 'Lys-129' acetylated form of BIRC5/survivin. Interacts with FER. Interacts (via SH2 domain) with EIF2AK2/PKR (via the kinase catalytic domain). Interacts with FGFR4. Interacts with INPP5F; the interaction is independent of STAT3 Tyr-705 phosphorylation status. Interacts with OCIAD1. Interacts with OCIAD2. Interacts (unphosphorylated or phosphorylated at Ser-727) with PHB1. Interacts and may form heterodimers with NHLH1. Found in a complex with SLC39A6, SLC39A10 and with the 'Ser-727' phosphorylated form of STAT3 throughout mitosis. Interacts (when acetylated) with EP300 (via bromo domain); interaction takes place following STAT3 acetylation by EP300 and promotes enhanceosome assembly. Interacts (when acetylated) with BRD2 (via bromo domain); interaction promotes STAT3 recruitment to chromatin and T-helper Th17 cell differentiation. Interacts with FAM220A/SIPAR; the interaction occurs in both the nucleus and the cytoplasm, is enhanced by IL6 and promotes STAT3 dephosphorylation. Interacts in both unphosphorylated and phosphorylated forms with FAM220A but interacts preferentially in the phosphorylated form in the nucleus. Interacts with PTPN2; the interaction is promoted by FAM220A and leads to STAT3 dephosphorylation which negatively regulates STAT3 transcriptional activator activity. Post-translationally, activated through tyrosine phosphorylation by BMX. Tyrosine phosphorylated in response to IL6, IL11, CNTF, LIF, KITLG/SCF, CSF1, EGF, PDGF, IFN-alpha, LEP and OSM. Activated KIT promotes phosphorylation on tyrosine residues and subsequent translocation to the nucleus. Tyrosine phosphorylated in response to constitutively activated FGFR1, FGFR2, FGFR3 and FGFR4. Phosphorylated on serine upon DNA damage, probably by ATM or ATR. Serine phosphorylation is important for the formation of stable DNA-binding STAT3 homodimers and maximal transcriptional activity. ARL2BP may participate in keeping the phosphorylated state of STAT3 within the nucleus. Tyrosine phosphorylated upon stimulation with EGF. Upon LPS challenge, phosphorylated within the nucleus by IRAK1. Upon UV-A treatment, phosphorylated on Ser-727 by RPS6KA5. Dephosphorylation on tyrosine residues by PTPN2 negatively regulates IL6/interleukin-6 signaling. Phosphorylation at Tyr-705 by PTK6, isoform M2 of PKM (PKM2) or FER leads to an increase of its transcriptional activity. Phosphorylation at Tyr-705 is increased in the presence of calcineurin. Phosphorylation at Tyr-640 by TYK2 negatively regulates transcriptional activity. In terms of processing, acetylated on lysine residues by EP300/p300, promoting its activation. Acetylation at Lys-49 and Lys-87 by EP300/p300 promotes its activation. Acetylation at Lys-87 by EP300/p300 promotes its association with BRD2 and recruitment to chromatin. Deacetylated at Lys-49 and Lys-87 by HDAC1. Acetylation at Lys-685 by EP300/p300 promotes its homodimerization and activation. Deacetylated at Lys-685 by HDAC3. Acetylated on lysine residues by CREBBP. Deacetylation by LOXL3 leads to disrupt STAT3 dimerization and inhibit STAT3 transcription activity. Oxidation of lysine residues to allysine on STAT3 preferentially takes place on lysine residues that are acetylated. Some lysine residues are oxidized to allysine by LOXL3, leading to disrupt STAT3 dimerization and inhibit STAT3 transcription activity. Oxidation of lysine residues to allysine on STAT3 preferentially takes place on lysine residues that are acetylated. Post-translationally, (Microbial infection) Phosphorylated on Tyr-705 in the presence of S.typhimurium SarA. As to expression, expressed in ventricular cardiomyocytes (at protein level). Expressed in the lung (at protein level). Expressed in the liver, spleen and kidney. In terms of tissue distribution, expressed in the liver.

The protein resides in the cytoplasm. It localises to the nucleus. Its function is as follows. Signal transducer and transcription activator that mediates cellular responses to interleukins, KITLG/SCF, LEP and other growth factors. Once activated, recruits coactivators, such as NCOA1 or MED1, to the promoter region of the target gene. May mediate cellular responses to activated FGFR1, FGFR2, FGFR3 and FGFR4. Upon activation of IL6ST/gp130 signaling by interleukin-6 (IL6), binds to the IL6-responsive elements identified in the promoters of various acute-phase protein genes. Activated by IL31 through IL31RA. Acts as a regulator of inflammatory response by regulating differentiation of naive CD4(+) T-cells into T-helper Th17 or regulatory T-cells (Treg): acetylation promotes its transcription activity and cell differentiation while deacetylation and oxidation of lysine residues by LOXL3 inhibits differentiation. Involved in cell cycle regulation by inducing the expression of key genes for the progression from G1 to S phase, such as CCND1. Mediates the effects of LEP on melanocortin production, body energy homeostasis and lactation. May play an apoptotic role by transctivating BIRC5 expression under LEP activation. Cytoplasmic STAT3 represses macroautophagy by inhibiting EIF2AK2/PKR activity. Plays a crucial role in basal beta cell functions, such as regulation of insulin secretion. Following JAK/STAT signaling activation and as part of a complex with NFATC3 and NFATC4, binds to the alpha-beta E4 promoter region of CRYAB and activates transcription in cardiomyocytes. Plays an important role in host defense in methicillin-resistant S.aureus lung infection by regulating the expression of the antimicrobial lectin REG3G. This is Signal transducer and activator of transcription 3 from Mus musculus (Mouse).